Consider the following 523-residue polypeptide: Major facilitator-type transporter psiT2 (523 aa).

Over residues 1 to 26 (MSLERSTSPNPTERTSLLSDTASTIS) the composition is skewed to polar residues. The tract at residues 1–45 (MSLERSTSPNPTERTSLLSDTASTISSRDDVEQSSLKQRRTPIPT) is disordered. Transmembrane regions (helical) follow at residues 88–108 (FYSG…IFML), 125–145 (ALGI…TMML), 149–169 (VCAG…SELT), 175–195 (ALVV…GPLI), and 221–241 (FLPS…GYFF). N269 is a glycosylation site (N-linked (GlcNAc...) asparagine). 3 helical membrane passes run 317–337 (FLMF…FTAV), 352–372 (AFSV…PWVL), and 382–402 (HFCM…NPLA). A glycan (N-linked (GlcNAc...) asparagine) is linked at N410. 3 helical membrane-spanning segments follow: residues 419–439 (GLLY…VMAF), 455–474 (LATA…AFCP), and 488–508 (NILG…VGVW).

Belongs to the major facilitator superfamily. TCR/Tet family.

The protein resides in the membrane. Functionally, major facilitator-type transporter; part of the gene cluster that mediates the biosynthesis of psilocybin, a psychotropic tryptamine-derived natural product. The chain is Major facilitator-type transporter psiT2 from Psilocybe cubensis (Psychedelic mushroom).